The primary structure comprises 148 residues: Lysozyme C-2 (148 aa).

The signal sequence occupies residues 1–18 (MKTLLTLGLLLLSVTAQA). The region spanning 19–148 (KVYERCEFAR…LSQYIRNCGV (130 aa)) is the C-type lysozyme domain. Disulfide bonds link Cys24–Cys146, Cys48–Cys134, Cys83–Cys99, and Cys95–Cys113. Active-site residues include Glu53 and Asp71.

It belongs to the glycosyl hydrolase 22 family. In terms of assembly, monomer. As to expression, expressed weakly in myeloblasts, moderately in immature macrophages, and strongly in both mature macrophages and macrophage-rich tissues.

It localises to the secreted. It carries out the reaction Hydrolysis of (1-&gt;4)-beta-linkages between N-acetylmuramic acid and N-acetyl-D-glucosamine residues in a peptidoglycan and between N-acetyl-D-glucosamine residues in chitodextrins.. Lysozymes have primarily a bacteriolytic function; those in tissues and body fluids are associated with the monocyte-macrophage system and enhance the activity of immunoagents. Lyz2 is active against a range of Gram-positive and Gram-negative bacteria. More effective than Lyz1 in killing Gram-negative bacteria. Lyz1 and Lyz2 are equally effective in killing Gram-positive bacteria. The chain is Lysozyme C-2 (Lyz2) from Mus musculus (Mouse).